The chain runs to 81 residues: Small ribosomal subunit protein bS16 (81 aa).

This sequence belongs to the bacterial ribosomal protein bS16 family.

This Lachnoclostridium phytofermentans (strain ATCC 700394 / DSM 18823 / ISDg) (Clostridium phytofermentans) protein is Small ribosomal subunit protein bS16.